A 411-amino-acid chain; its full sequence is Tubulin beta-2 chain (411 aa).

Glutamate 37, serine 106, glycine 110, threonine 111, glycine 112, asparagine 172, and asparagine 194 together coordinate GTP. Glutamate 37 contributes to the Mg(2+) binding site. A disordered region spans residues 392 to 411 (QYQDATAEPEGXYEEDYDEA). Over residues 402 to 411 (GXYEEDYDEA) the composition is skewed to acidic residues.

This sequence belongs to the tubulin family. As to quaternary structure, dimer of alpha and beta chains. A typical microtubule is a hollow water-filled tube with an outer diameter of 25 nm and an inner diameter of 15 nM. Alpha-beta heterodimers associate head-to-tail to form protofilaments running lengthwise along the microtubule wall with the beta-tubulin subunit facing the microtubule plus end conferring a structural polarity. Microtubules usually have 13 protofilaments but different protofilament numbers can be found in some organisms and specialized cells. The cofactor is Mg(2+).

It localises to the cytoplasm. The protein resides in the cytoskeleton. Functionally, tubulin is the major constituent of microtubules, a cylinder consisting of laterally associated linear protofilaments composed of alpha- and beta-tubulin heterodimers. Microtubules grow by the addition of GTP-tubulin dimers to the microtubule end, where a stabilizing cap forms. Below the cap, tubulin dimers are in GDP-bound state, owing to GTPase activity of alpha-tubulin. This Anemia phyllitidis (Fern) protein is Tubulin beta-2 chain (TUBB2).